Here is a 317-residue protein sequence, read N- to C-terminus: Protease HtpX homolog (317 aa).

2 helical membrane-spanning segments follow: residues Leu-14–Ile-34 and Ile-41–Phe-61. His-146 is a binding site for Zn(2+). Glu-147 is an active-site residue. Zn(2+) is bound at residue His-150. 2 helical membrane passes run Met-158–Phe-178 and Ile-189–Ala-209. Glu-215 serves as a coordination point for Zn(2+).

Belongs to the peptidase M48B family. Requires Zn(2+) as cofactor.

Its subcellular location is the cell membrane. The sequence is that of Protease HtpX homolog from Thermoplasma acidophilum (strain ATCC 25905 / DSM 1728 / JCM 9062 / NBRC 15155 / AMRC-C165).